Here is a 740-residue protein sequence, read N- to C-terminus: Ethylene receptor 1 (740 aa).

The next 3 membrane-spanning stretches (helical) occupy residues 23 to 43 (ISDF…IYFV), 53 to 73 (WVLV…LINL), and 95 to 115 (AAVS…LLSV). The Cu cation site is built by Cys65 and His69. The 150-residue stretch at 158–307 (DRHTILKTTL…VVADQVAVAL (150 aa)) folds into the GAF domain. Positions 350–587 (VMNHEMRTPM…TVTFVVKLGI (238 aa)) constitute a Histidine kinase domain. His353 bears the Phosphohistidine; by autocatalysis mark. The Response regulatory domain occupies 615 to 732 (KVLLMDENGI…KMRNVLSKLL (118 aa)). Asp663 carries the post-translational modification 4-aspartylphosphate.

This sequence belongs to the ethylene receptor family. As to quaternary structure, homodimer; disulfide-linked. Cu cation serves as cofactor. Post-translationally, activation probably requires a transfer of a phosphate group between a His in the transmitter domain and an Asp of the receiver domain.

The protein resides in the endoplasmic reticulum membrane. The catalysed reaction is ATP + protein L-histidine = ADP + protein N-phospho-L-histidine.. Its function is as follows. May act early in the ethylene signal transduction pathway, possibly as an ethylene receptor, or as a regulator of the pathway. The chain is Ethylene receptor 1 (ETR1) from Pelargonium hortorum (Common geranium).